The chain runs to 28 residues: Chassatide C11 (28 aa).

3 cysteine pairs are disulfide-bonded: Cys3/Cys19, Cys7/Cys21, and Cys12/Cys26. Residue Met16 is modified to Methionine sulfoxide; in form chassatide chaC11A.

The protein belongs to the cyclotide family. Bracelet subfamily. In terms of tissue distribution, expressed in fruit, pedicel and stem but not in leaf and root (at protein level).

In terms of biological role, chassatide C11: Probably participates in a plant defense mechanism. Active against E.coli ATCC 25922 (MIC=8.5 uM) but not against S.aureus ATCC 12600 or S.epidermidis ATCC 14990. Has cytotoxic and hemolytic activity. Chassatide C11A: Probably participates in a plant defense mechanism. Has no activity against bacteria up to a concentration of 80 uM. Has no cytotoxic and no hemolytic activity. The polypeptide is Chassatide C11 (Chassalia chartacea (Chassalia curviflora)).